The chain runs to 323 residues: Beta-ketoacyl-[acyl-carrier-protein] synthase III 1 (323 aa).

Active-site residues include Cys-114 and His-254. The interval 255–259 is ACP-binding; it reads QANLR. Residue Asn-284 is part of the active site.

It belongs to the thiolase-like superfamily. FabH family. As to quaternary structure, homodimer.

It localises to the cytoplasm. It catalyses the reaction malonyl-[ACP] + acetyl-CoA + H(+) = 3-oxobutanoyl-[ACP] + CO2 + CoA. It participates in lipid metabolism; fatty acid biosynthesis. Its function is as follows. Catalyzes the condensation reaction of fatty acid synthesis by the addition to an acyl acceptor of two carbons from malonyl-ACP. Catalyzes the first condensation reaction which initiates fatty acid synthesis and may therefore play a role in governing the total rate of fatty acid production. Possesses both acetoacetyl-ACP synthase and acetyl transacylase activities. Its substrate specificity determines the biosynthesis of branched-chain and/or straight-chain of fatty acids. This chain is Beta-ketoacyl-[acyl-carrier-protein] synthase III 1, found in Lactiplantibacillus plantarum (strain ATCC BAA-793 / NCIMB 8826 / WCFS1) (Lactobacillus plantarum).